We begin with the raw amino-acid sequence, 407 residues long: MPVPSPMRLAVTHEGRSIIYIPSPEYAVASGRLEPAWLEVFYNPAMEFNRDVSVVAASALRRTGLLTRSGVAFDAHAGVGVRGVRYAVEAGYVKVIMNDINPKASMLAALNARANGLEPGSYMIFNKESNSLMFHLSRERPTPVSLIDIDPYGSPAPFVDAALALSGKGTVVAMTATDLAVLEGGKARAAVRRYMLRSVSKTPVSKETGLRVLLGYVARVAAAHDKAVKPLLAYYADHYYRVYVAVERGARRSDSMLEENLGRLVYCPETGVALALSYAEDPASACGGSYVVAADPAWIGSLGDQAFLEAMLNIAVEAVWLGTRPRVEKLLNTLHGEAPLSPRSIYVSLTSVASKARVNTPKKSKVVELLRSMGYRAVATHFSGEGVRTDAPWGEVLEAVVKLGSSG.

The 391-residue stretch at 10–400 (AVTHEGRSII…APWGEVLEAV (391 aa)) folds into the Trm1 methyltransferase domain. Positions 50, 82, 99, and 128 each coordinate S-adenosyl-L-methionine.

This sequence belongs to the class I-like SAM-binding methyltransferase superfamily. Trm1 family.

It catalyses the reaction guanosine(26) in tRNA + 2 S-adenosyl-L-methionine = N(2)-dimethylguanosine(26) in tRNA + 2 S-adenosyl-L-homocysteine + 2 H(+). In terms of biological role, dimethylates a single guanine residue at position 26 of a number of tRNAs using S-adenosyl-L-methionine as donor of the methyl groups. This chain is tRNA (guanine(26)-N(2))-dimethyltransferase, found in Aeropyrum pernix (strain ATCC 700893 / DSM 11879 / JCM 9820 / NBRC 100138 / K1).